Reading from the N-terminus, the 623-residue chain is MECKIEGKEKYQHSLNLLNKIQNMKELAEMIDVVLTAEGEKFPCHRLVLAAFSPYFKAMFTCGLLECNQREVILYDITAESVSVLLNYMYNAALEINNANVQTVAMAAYFMQMEEVFSVCQKYMMDHMDASNCLGIYYFAKQIGAEDLSDRSKKYLYQHFAEVSLHEEILEIEVHQFLTLIKSDDLNISREESILDLVLRWVNHNKELRTVHLVELLKQVRLELVNPSFLRQALRRNTMLLCDADCVDIIQNAFKAIKTPQQHSLNLRYGMETTSLLLCIGNNSSGIRSRHRSYGDASFCYDPVSRKTYFISSPKYGEGLGTVCTGVVMENNTIIVAGEASASKLSRQKNKNVEIYRYHDRGNQFWEKLCTAEFRELYALGSIHNDLYVIGGQMKIKNQYLITNCVDKYSVERDNWKRVSPLPLQLACHAVVTVNNKLYVIGGWTPQMDLPDEEPDRLSNKLLQYDPSQDQWSVRAPMKYSKYRFSTAVVNSEIYVLGGIGCVGQDKGQVRKCLDVVEIYNPDGDFWREGPPMPSPLLSLRTNSTNAGAVDGKLYVCGGFHGADRHEVISKEILELDPWENQWNVVAINVLMHDSYDVCLVARMNPRDLIPPPSDLVEEGNEH.

The 68-residue stretch at 31-98 (IDVVLTAEGE…MYNAALEINN (68 aa)) folds into the BTB domain. A BACK domain is found at 133–235 (CLGIYYFAKQ…NPSFLRQALR (103 aa)). Kelch repeat units lie at residues 386 to 436 (DLYV…TVNN), 437 to 492 (KLYV…VVNS), 494 to 547 (IYVL…STNA), and 553 to 603 (KLYV…LVAR).

The chain is Kelch repeat and BTB domain-containing protein 12 (KBTBD12) from Homo sapiens (Human).